The following is a 91-amino-acid chain: UPF0358 protein SSP1677 (91 aa).

It belongs to the UPF0358 family.

This is UPF0358 protein SSP1677 from Staphylococcus saprophyticus subsp. saprophyticus (strain ATCC 15305 / DSM 20229 / NCIMB 8711 / NCTC 7292 / S-41).